We begin with the raw amino-acid sequence, 156 residues long: Snaclec stejaggregin-B subunit alpha (156 aa).

Positions 1–23 (MGRFISVSFGLLVVFLSLSGTGA) are cleaved as a signal peptide. 3 disulfides stabilise this stretch: C25/C36, C53/C150, and C125/C142. Residues 32–151 (FKQYCYQIIK…CEQKHLFMCK (120 aa)) enclose the C-type lectin domain.

It belongs to the snaclec family. As to quaternary structure, heteromultimer; disulfide-linked. Expressed by the venom gland.

It localises to the secreted. Functionally, interferes with one step of hemostasis (modulation of platelet aggregation, or coagulation cascade, for example). This Trimeresurus stejnegeri (Chinese green tree viper) protein is Snaclec stejaggregin-B subunit alpha.